The following is a 1270-amino-acid chain: Microtubule-associated tumor suppressor 1 (1270 aa).

A compositionally biased stretch (acidic residues) spans 1–14 (MTDDNSDDKIEDEL). Disordered stretches follow at residues 1 to 50 (MTDD…NSAN) and 184 to 236 (FHTA…VTPS). Positions 38-50 (NSSASSVNWNSAN) are enriched in low complexity. Threonine 186 carries the post-translational modification Phosphothreonine. Residues 197 to 211 (SGSTSSLSYSTWTSS) are compositionally biased toward low complexity. Basic and acidic residues predominate over residues 212 to 228 (HSDKTHARETTYDRESF). Serine 381, serine 399, and serine 443 each carry phosphoserine. Disordered stretches follow at residues 524 to 560 (DAAL…PRSD) and 592 to 622 (THSK…SSSN). Polar residues predominate over residues 533 to 556 (RPQQTSASSPSSVNSRQQTVLSRT). The residue at position 629 (serine 629) is a Phosphoserine. Polar residues-rich tracts occupy residues 701–710 (SKTTTTSGRN), 759–776 (VSSS…SSWV), and 797–815 (TGST…TYSN). Positions 701–815 (SKTTTTSGRN…THSELSTYSN (115 aa)) are disordered. Residues 940-1231 (IQHLLSEREE…RLSMENEELL (292 aa)) are a coiled coil. Phosphoserine is present on residues serine 1203, serine 1224, serine 1245, serine 1255, serine 1259, serine 1261, serine 1264, and serine 1268. The disordered stretch occupies residues 1237–1270 (GDLCSPKRSPTSSAIPLQSPRNSGSFPSPSISPR). Residues 1244–1270 (RSPTSSAIPLQSPRNSGSFPSPSISPR) are compositionally biased toward polar residues.

This sequence belongs to the MTUS1 family. As to quaternary structure, homodimer. Interacts with AGTR2. Interacts with PTPN6. Isoform 1 associates with microtubules. In terms of tissue distribution, ubiquitously expressed (at protein level). Highly expressed in brain. Down-regulated in ovarian carcinoma, pancreas carcinoma, colon carcinoma and head and neck squamous cell carcinoma (HNSCC). Isoform 1 is the major isoform in most peripheral tissues. Isoform 2 is abundant in most peripheral tissues. Isoform 3 is the major isoform in brain, female reproductive tissues, thyroid and heart. Within brain it is highly expressed in corpus callosum and pons. Isoform 6 is brain-specific, it is the major isoform in cerebellum and fetal brain.

The protein resides in the mitochondrion. The protein localises to the golgi apparatus. It is found in the cell membrane. It localises to the nucleus. Its subcellular location is the cytoplasm. The protein resides in the cytoskeleton. The protein localises to the microtubule organizing center. It is found in the centrosome. It localises to the spindle. Functionally, cooperates with AGTR2 to inhibit ERK2 activation and cell proliferation. May be required for AGTR2 cell surface expression. Together with PTPN6, induces UBE2V2 expression upon angiotensin-II stimulation. Isoform 1 inhibits breast cancer cell proliferation, delays the progression of mitosis by prolonging metaphase and reduces tumor growth. The protein is Microtubule-associated tumor suppressor 1 (MTUS1) of Homo sapiens (Human).